We begin with the raw amino-acid sequence, 696 residues long: D-(-)-3-hydroxybutyrate oligomer hydrolase (696 aa).

Residues 1–26 (MDTHGWGSRILVGAALAALTMLGACN) form the signal peptide. The Charge relay system role is filled by S309.

The protein belongs to the D-(-)-3-hydroxybutyrate oligomer hydrolase family.

The protein resides in the secreted. The enzyme catalyses (3R)-hydroxybutanoate dimer + H2O = 2 (R)-3-hydroxybutanoate + H(+). Its pathway is lipid metabolism; butanoate metabolism. In terms of biological role, participates in the degradation of poly-3-hydroxybutyrate (PHB). It works downstream of poly(3-hydroxybutyrate) depolymerase, hydrolyzing D(-)-3-hydroxybutyrate oligomers of various length (3HB-oligomers) into 3HB-monomers. The protein is D-(-)-3-hydroxybutyrate oligomer hydrolase of Burkholderia vietnamiensis (strain G4 / LMG 22486) (Burkholderia cepacia (strain R1808)).